Reading from the N-terminus, the 464-residue chain is Asparagine--tRNA ligase (464 aa).

The protein belongs to the class-II aminoacyl-tRNA synthetase family. As to quaternary structure, homodimer.

Its subcellular location is the cytoplasm. It carries out the reaction tRNA(Asn) + L-asparagine + ATP = L-asparaginyl-tRNA(Asn) + AMP + diphosphate + H(+). This Cytophaga hutchinsonii (strain ATCC 33406 / DSM 1761 / CIP 103989 / NBRC 15051 / NCIMB 9469 / D465) protein is Asparagine--tRNA ligase.